A 181-amino-acid chain; its full sequence is Mannose-specific lectin (181 aa).

The first 30 residues, 1–30, serve as a signal peptide directing secretion; the sequence is MGRTTSSPKAMMRIATVAAILTILASTCMA. Residues 31–140 enclose the Bulb-type lectin domain; it reads RNVLTNGEGL…DIWSTGTYRR (110 aa). Positions 56, 58, 60, 64, 71, 72, 74, 88, 90, 92, 96, 103, 104, 107, 114, 120, 122, 124, 128, and 133 each coordinate alpha-D-mannopyranose. The cysteines at positions 59 and 83 are disulfide-linked.

As to quaternary structure, homodimer.

It localises to the secreted. Functionally, mannose-specific lectin. Shows agglutinating activity towards rabbit erythrocytes. However, it does not show agglutinating activity towards human erythrocytes. Has insecticidal activity against the cotton leafworm S.littoralis and the peach potato aphid M.persicae. Also displays antiviral activity and therefore may contribute to defense against infections. The chain is Mannose-specific lectin from Allium sativum (Garlic).